The chain runs to 296 residues: Cytidine deaminase (296 aa).

CMP/dCMP-type deaminase domains are found at residues 47–167 and 186–296; these read TEAE…FGPK and DSSD…VDPV. 88–90 serves as a coordination point for substrate; that stretch reads NLE. Residue H101 coordinates Zn(2+). The active-site Proton donor is E103. The Zn(2+) site is built by C128 and C131.

The protein belongs to the cytidine and deoxycytidylate deaminase family. Homodimer. Zn(2+) serves as cofactor.

The enzyme catalyses cytidine + H2O + H(+) = uridine + NH4(+). It carries out the reaction 2'-deoxycytidine + H2O + H(+) = 2'-deoxyuridine + NH4(+). In terms of biological role, this enzyme scavenges exogenous and endogenous cytidine and 2'-deoxycytidine for UMP synthesis. The sequence is that of Cytidine deaminase from Shewanella sp. (strain ANA-3).